The following is a 147-amino-acid chain: Nucleoside diphosphate kinase (147 aa).

Positions 11, 59, 87, 93, 104, and 114 each coordinate ATP. Catalysis depends on His-117, which acts as the Pros-phosphohistidine intermediate.

The protein belongs to the NDK family. As to quaternary structure, homotetramer. Mg(2+) is required as a cofactor.

It is found in the cytoplasm. The enzyme catalyses a 2'-deoxyribonucleoside 5'-diphosphate + ATP = a 2'-deoxyribonucleoside 5'-triphosphate + ADP. The catalysed reaction is a ribonucleoside 5'-diphosphate + ATP = a ribonucleoside 5'-triphosphate + ADP. Its function is as follows. Major role in the synthesis of nucleoside triphosphates other than ATP. The ATP gamma phosphate is transferred to the NDP beta phosphate via a ping-pong mechanism, using a phosphorylated active-site intermediate. In Anaeromyxobacter sp. (strain K), this protein is Nucleoside diphosphate kinase.